We begin with the raw amino-acid sequence, 442 residues long: Amino-acid acetyltransferase (442 aa).

The N-acetyltransferase domain maps to 295-442 (EQARAATIED…RSKVLSKTIS (148 aa)).

Belongs to the acetyltransferase family. ArgA subfamily.

It is found in the cytoplasm. The catalysed reaction is L-glutamate + acetyl-CoA = N-acetyl-L-glutamate + CoA + H(+). It functions in the pathway amino-acid biosynthesis; L-arginine biosynthesis; N(2)-acetyl-L-ornithine from L-glutamate: step 1/4. The polypeptide is Amino-acid acetyltransferase (Aeromonas salmonicida (strain A449)).